We begin with the raw amino-acid sequence, 1404 residues long: Probable GPI-anchored adhesin-like protein PGA55 (1404 aa).

The first 19 residues, 1 to 19 (MVLLCKYKVSWVFVLSVAG), serve as a signal peptide directing secretion. 87 consecutive repeat copies span residues 104–109 (VSSSSS), 136–141 (VSSSSE), 156–161 (VSSSSK), 162–167 (VSSSSE), 183–188 (VSSSSQ), 196–201 (VSSSSE), 203–208 (VSSSSE), 209–214 (VSSSSE), 216–221 (VSSSSE), 222–227 (VSSSSE), 228–233 (VSSSSE), 234–239 (VSSSSQ), 247–252 (VSSSSE), 253–258 (VSSSSS), 261–266 (VSSSSE), 267–272 (VSSSSE), 274–279 (VSSSSE), 280–285 (VSSSSE), 286–291 (VSSSSE), 292–297 (VSSSSE), 298–303 (VSSSSE), 304–309 (VSSSSQ), 317–322 (VSSSSE), 324–329 (VSSSSE), 330–335 (VSSSSE), 336–341 (VSSSSE), 343–348 (VSSSSE), 349–354 (VSSSSE), 355–360 (VSSSSE), 361–366 (VSSSSQ), 374–379 (VSSSSE), 380–385 (VSSSSS), 388–393 (VSSSSE), 394–399 (VSSSSE), 401–406 (VSSSSE), 407–412 (VSSSSE), 413–418 (VSSSSE), 419–424 (VSSSSE), 425–430 (VSSSSE), 431–436 (VSSSSQ), 444–449 (VSSSSE), 450–455 (VSSSSE), 457–462 (VSSSSE), 463–468 (VSSSSE), 469–474 (VSSSSE), 475–480 (VSSSSQ), 488–493 (VSSSSE), 494–500 (VSSSSSE), 502–507 (VSSSSE), 508–513 (VSSSSE), 515–520 (VSSSSE), 521–526 (VSSSSE), 527–532 (VSSSSE), 533–538 (VSSSSQ), 546–551 (VSSSSE), 552–557 (VSSSSS), 560–565 (VSSSSE), 566–571 (VSSSSE), 573–578 (VSSSSE), 579–584 (VSSSSE), 585–590 (VSSSSE), 591–596 (VSSSSQ), 604–609 (VSSSSE), 611–616 (VSSSSE), 617–622 (VSSSSE), 623–628 (VSSSSE), 629–634 (VSSSSE), 635–640 (VSSSSE), 641–646 (VSSSSQ), 654–659 (VSSSSE), 660–665 (VSSSSS), 668–673 (VSSSSE), 674–679 (VSSSSE), 681–686 (VSSSSE), 687–692 (VSSSSE), 693–698 (VSSSSE), 699–704 (VSSSSQ), 712–717 (VSSSSE), 719–724 (VSSSSE), 725–730 (VSSSSE), 731–736 (VSSSSE), 737–742 (VSSSSE), 743–748 (VSSSSE), 749–754 (VSSSSE), 771–776 (VTSSSE), 777–782 (VSSSSQ), and 797–802 (VSSSSE). The segment at 104-541 (VSSSSSEVIS…EVSSSSQVTS (438 aa)) is 88 X 6 AA approximate tandem repeats. A disordered region spans residues 113–833 (SSSSEEASSS…VSSSSASSEV (721 aa)). Asn817 carries an N-linked (GlcNAc...) asparagine glycan. One copy of the 1-88 repeat lies at 824–829 (VSSSSA). Residues Asn994 and Asn1074 are each glycosylated (N-linked (GlcNAc...) asparagine). Residue Asn1382 is the site of GPI-anchor amidated asparagine attachment. The propeptide at 1383–1404 (AASRQSFNYKFIVGLILAYIIA) is removed in mature form.

The protein resides in the cell membrane. Functionally, predicted GPI-anchored adhesin-like protein which may be involved in filamentous growth and chlamydospore formation. This Candida albicans (strain SC5314 / ATCC MYA-2876) (Yeast) protein is Probable GPI-anchored adhesin-like protein PGA55 (PGA55).